The sequence spans 299 residues: Tyrosine recombinase XerC (299 aa).

One can recognise a Core-binding (CB) domain in the interval Met1–Asn85. The 180-residue stretch at Arg106–Asp285 folds into the Tyr recombinase domain. Active-site residues include Arg146, Lys170, His237, Arg240, and His263. Tyr272 serves as the catalytic O-(3'-phospho-DNA)-tyrosine intermediate.

Belongs to the 'phage' integrase family. XerC subfamily. As to quaternary structure, forms a cyclic heterotetrameric complex composed of two molecules of XerC and two molecules of XerD.

The protein localises to the cytoplasm. Functionally, site-specific tyrosine recombinase, which acts by catalyzing the cutting and rejoining of the recombining DNA molecules. The XerC-XerD complex is essential to convert dimers of the bacterial chromosome into monomers to permit their segregation at cell division. It also contributes to the segregational stability of plasmids. This chain is Tyrosine recombinase XerC, found in Stutzerimonas stutzeri (strain A1501) (Pseudomonas stutzeri).